The primary structure comprises 714 residues: MGSRESHLYEKPSEKLEEFIQNHLRPSEDCQKDIDQSVDTICEVLQEPCPSLTVTGVAKGGSYGRRTVLRGNSDGILVVFFGDLEQFQDQEKRQYELLSKIWAQMKHCESTWKLAAKMELQNTNRSSRVTIQLSTKQQSITFNVLPAFNALGLSEKSSLWSYRELKRSLDMVKARPGEFSVCFTELQEKFFSNYPSKLKDLILLVKHWFQKCQEKLINSSLLPPYALELLTVYAWEQGCGAEDFDMAEGVRTVLRLIEKQEQLCVYWTVNYNFGDEIVRNILLSQLQAPRPVILDPTDPTNNVSMDNTCWLQLKHEAQNWLRSLRQNESPGPSWNVLPASLYITPGHLLDKFVKDFLQPNQTFQDQIKKALKIICSFLEENCFRHSTTKIQVIQGGSTVKGTALKTGSDASLVVFANSLKSYTSPKNERYNIIKEIHEQLEACRQEKDFEVKFEISKWKPPWVLSFTLKSKVLNESVDFDVLPAFNALGELKSGSTPSPRTYTELIHLYKPSDVFLEGEFSACFTKLQRNFVRSLPLKLKDLIRLLKHWYCGCEKKLKQKGSLPPKYALELLSIYAWEKGSGAQDFDMAEGFRTVLELVIQYQHLCVFWTVNYSFDDEILRNFLLGQIRRTRPVILDPADPTGDVGGGHRWCWHLLAKEATEWLSSLCFKDKSGCPIQPWNVPKKRVQTPGSCGAGIYSMVNEMHLLRSHRFLD.

G2 carries N-myristoyl glycine lipidation. 2 OAS domain regions span residues 11-336 and 344-683; these read KPSE…SWNV and TPGH…WNVP. S397 is an ATP binding site. Mg(2+) contacts are provided by D409 and D480. The ATP site is built by R544 and K547.

Belongs to the 2-5A synthase family. As to quaternary structure, homodimer. Requires Mg(2+) as cofactor. In terms of processing, myristoylation is not essential for its activity. Post-translationally, glycosylated. Glycosylation is essential for its activity.

It localises to the cytoplasm. Its subcellular location is the perinuclear region. The catalysed reaction is 3 ATP = 5'-triphosphoadenylyl-(2'-&gt;5')-adenylyl-(2'-&gt;5')-adenosine + 2 diphosphate. Produced as a latent enzyme which is activated by double stranded RNA (dsRNA) generated during the course of viral infection. The dsRNA activator must be at least 15 nucleotides long, and no modification of the 2'-hydroxyl group is tolerated. ssRNA or dsDNA do not act as activators. Strongly inhibited by copper, iron and zinc ions. Partially inhibited by cobalt and nickel ions. In terms of biological role, interferon-induced, dsRNA-activated antiviral enzyme which plays a critical role in cellular innate antiviral response. Activated by detection of double stranded RNA (dsRNA): polymerizes higher oligomers of 2'-5'-oligoadenylates (2-5A) from ATP which then bind to the inactive monomeric form of ribonuclease L (RNASEL) leading to its dimerization and subsequent activation. Activation of RNASEL leads to degradation of cellular as well as viral RNA, resulting in the inhibition of protein synthesis, thus terminating viral replication. Can mediate the antiviral effect via the classical RNASEL-dependent pathway or an alternative antiviral pathway independent of RNASEL. In addition, it may also play a role in other cellular processes such as apoptosis, cell growth, differentiation and gene regulation. May act as a negative regulator of lactation, stopping lactation in virally infected mammary gland lobules, thereby preventing transmission of viruses to neonates. Non-infected lobules would not be affected, allowing efficient pup feeding during infection. This is 2'-5'-oligoadenylate synthase 2 (OAS2) from Bos taurus (Bovine).